The following is a 534-amino-acid chain: Corneodesmosin (534 aa).

A signal peptide spans 1 to 32; sequence MGLSRAPWMGRVGGRGMMALLLAGLLLPGTLA. Disordered regions lie at residues 38–252 and 396–497; these read FSDP…HSVS and CSPF…GSAG. 5 stretches are compositionally biased toward low complexity: residues 64–82, 107–185, 200–236, 397–415, and 431–446; these read GFSS…SSAS, GYSQ…SGSA, SQLG…SGGP, SPFS…SSGS, and PGTG…QSSG. Polar residues predominate over residues 454–472; it reads GSKSSSSGHPCMSVSSLTL.

It localises to the secreted. Its function is as follows. Important for the epidermal barrier integrity. The protein is Corneodesmosin (CDSN) of Macaca mulatta (Rhesus macaque).